A 228-amino-acid polypeptide reads, in one-letter code: tRNA (guanine-N(1)-)-methyltransferase (228 aa).

Residues G111 and 130-135 contribute to the S-adenosyl-L-methionine site; that span reads IGDFVL.

It belongs to the RNA methyltransferase TrmD family. As to quaternary structure, homodimer.

It is found in the cytoplasm. It catalyses the reaction guanosine(37) in tRNA + S-adenosyl-L-methionine = N(1)-methylguanosine(37) in tRNA + S-adenosyl-L-homocysteine + H(+). Functionally, specifically methylates guanosine-37 in various tRNAs. This chain is tRNA (guanine-N(1)-)-methyltransferase, found in Ureaplasma parvum serovar 3 (strain ATCC 27815 / 27 / NCTC 11736).